A 162-amino-acid polypeptide reads, in one-letter code: NADH-quinone oxidoreductase subunit C (162 aa).

It belongs to the complex I 30 kDa subunit family. NDH-1 is composed of 14 different subunits. Subunits NuoB, C, D, E, F, and G constitute the peripheral sector of the complex.

It is found in the cell inner membrane. The catalysed reaction is a quinone + NADH + 5 H(+)(in) = a quinol + NAD(+) + 4 H(+)(out). NDH-1 shuttles electrons from NADH, via FMN and iron-sulfur (Fe-S) centers, to quinones in the respiratory chain. The immediate electron acceptor for the enzyme in this species is believed to be ubiquinone. Couples the redox reaction to proton translocation (for every two electrons transferred, four hydrogen ions are translocated across the cytoplasmic membrane), and thus conserves the redox energy in a proton gradient. In Geobacter metallireducens (strain ATCC 53774 / DSM 7210 / GS-15), this protein is NADH-quinone oxidoreductase subunit C.